Here is a 186-residue protein sequence, read N- to C-terminus: PR-toxin biosynthesis cluster protein 7 (186 aa).

The helical transmembrane segment at 24 to 43 (LGEVTTGGVTPRGTFIFCPI) threads the bilayer.

The protein localises to the membrane. It functions in the pathway sesquiterpene biosynthesis. Functionally, part of the gene cluster that mediates the biosynthesis of PR-toxin, a bicyclic sesquiterpene belonging to the eremophilane class and acting as a mycotoxin. The first step of the pathway is catalyzed by the aristolochene synthase which performs the cyclization of trans,trans-farnesyl diphosphate (FPP) to the bicyclic sesquiterpene aristolochene. Following the formation of aristolochene, the non-oxygenated aristolochene is converted to the trioxygenated intermediate eremofortin B, via 7-epi-neopetasone. This conversion appears to involve three enzymes, a hydroxysterol oxidase-like enzyme, the quinone-oxidase prx3 that forms the quinone-type-structure in the bicyclic nucleus of aristolochene with the C8-oxo group and the C-3 hydroxyl group, and the P450 monooxygenase ORF6 that introduces the epoxide at the double bond between carbons 1 and 2. No monoxy or dioxy-intermediates have been reported to be released to the broth, so these three early oxidative reactions may be coupled together. Eremofortin B is further oxidized by another P450 monooxygenase, that introduces a second epoxide between carbons 7 and 11 prior to acetylation to eremofortin A by the acetyltransferase ORF8. The second epoxidation may be performed by a second P450 monooxygenase. After the acetylation step, eremofortin A is converted to eremofortin C and then to PR-toxin. First the conversion of eremofortin A to eremofortin C proceeds by oxidation of the side chain of the molecule at C-12 and is catalyzed by the short-chain oxidoreductase prx1. The cytochrome P450 monooxygenase ORF6 is probably also involved in this step. The primary alcohol formed at C-12 is finally oxidized by the short-chain alcohol dehydrogenase prx4 that forms PR-toxin. This is PR-toxin biosynthesis cluster protein 7 from Penicillium roqueforti (strain FM164).